The sequence spans 329 residues: MGSMNKEQAFELLDAFYEAGGNCIDTANSYQNEESEIWIGEWMKSRKLRDQIVIATKFTGDYKKYEVGGGKSANYCGNHKHSLHVSVRDSLRKLQTDWIDILYVHWWDYMSSIEEVMDSLHILVQQGKVLYLGVSDTPAWVVSAANYYATSHGKTPFSIYQGKWNVLNRDFERDIIPMARHFGMALAPWDVMGGGRFQSKKAMEERKKNGEGLRTVSGTSKQTDKEVKISEALAKVAEEHGTESVTAIAIAYVRSKAKNVFPLVGGRKIEHLKQNIEALSIKLTPEQIEYLESIIPFDVGFPTNFIGDDPAVTKKASLLTAMSAQISFD.

The active-site Proton donor is Tyr-30. A substrate-binding site is contributed by His-105. 190 to 200 (DVMGGGRFQSK) provides a ligand contact to NADP(+).

Belongs to the aldo/keto reductase family. Aldo/keto reductase 2 subfamily.

This Saccharomyces cerevisiae (strain ATCC 204508 / S288c) (Baker's yeast) protein is Probable aryl-alcohol dehydrogenase AAD4 (AAD4).